A 212-amino-acid chain; its full sequence is Large ribosomal subunit protein uL3 (212 aa).

A disordered region spans residues 127 to 161 (NFKRGPMAHGSKNHRLPGSTGAGTTPGRVFPGKRM).

The protein belongs to the universal ribosomal protein uL3 family. In terms of assembly, part of the 50S ribosomal subunit. Forms a cluster with proteins L14 and L19.

In terms of biological role, one of the primary rRNA binding proteins, it binds directly near the 3'-end of the 23S rRNA, where it nucleates assembly of the 50S subunit. The protein is Large ribosomal subunit protein uL3 of Thermosynechococcus vestitus (strain NIES-2133 / IAM M-273 / BP-1).